Reading from the N-terminus, the 308-residue chain is Putative acetyl-hydrolase LipR (308 aa).

Residues 1–40 form the signal peptide; the sequence is MNLRKNVIRSVLRGARPLFASRRLGIAGRRVLLATLTAGA. Residues 76-78 carry the Involved in the stabilization of the negatively charged intermediate by the formation of the oxyanion hole motif; it reads HGG. Catalysis depends on residues serine 146, aspartate 239, and histidine 269.

Belongs to the 'GDXG' lipolytic enzyme family.

Its function is as follows. Required for maintaining the appropriate mycolic acid composition and permeability of the envelope on its exposure to acidic pH. The chain is Putative acetyl-hydrolase LipR (lipR) from Mycobacterium tuberculosis (strain ATCC 25618 / H37Rv).